The primary structure comprises 358 residues: MSIKIENLEKHFGSFHALKNINLQFKQNQLTALLGPSGCGKTTLLRIIAGLEFADSGKILFEHRDVTDLSAKDRGVGFVFQHYALFQNMTVYDNVAFGLRVKPRKERPSKEEIQQKVTALLKLVKLDWLANAYPNQLSGGQRQRIALARSLAVQPKVLLLDEPFGALDAQVRKELRRWLRDLHQELNVTSIFVTHDQDEALDVSDRIVVMNQGQIEQIDEPNQIYHAPQTPFVTQFVGDVNVFHGHIDEGNLVIGEFSHKIDPATNTTQPVNNQSATAYIRPYELTISRHADNALATGKITHINAIGFIVRIEIESAQSDQPIEVILTKAAYSQSQYKVNEQIYLVPDKLNLFQQMNI.

Residues 3–237 enclose the ABC transporter domain; that stretch reads IKIENLEKHF…PQTPFVTQFV (235 aa). 35–42 contributes to the ATP binding site; that stretch reads GPSGCGKT.

This sequence belongs to the ABC transporter superfamily. Sulfate/tungstate importer (TC 3.A.1.6) family. As to quaternary structure, the complex is composed of two ATP-binding proteins (CysA), two transmembrane proteins (CysT and CysW) and a solute-binding protein (CysP).

It localises to the cell inner membrane. The catalysed reaction is sulfate(out) + ATP + H2O = sulfate(in) + ADP + phosphate + H(+). The enzyme catalyses thiosulfate(out) + ATP + H2O = thiosulfate(in) + ADP + phosphate + H(+). Part of the ABC transporter complex CysAWTP involved in sulfate/thiosulfate import. Responsible for energy coupling to the transport system. This is Sulfate/thiosulfate import ATP-binding protein CysA from Mannheimia succiniciproducens (strain KCTC 0769BP / MBEL55E).